A 394-amino-acid polypeptide reads, in one-letter code: Elongation factor Tu (394 aa).

One can recognise a tr-type G domain in the interval 10–204 (KPHVNIGTIG…AVDSYIPQPV (195 aa)). The tract at residues 19-26 (GHVDHGKT) is G1. GTP is bound at residue 19 to 26 (GHVDHGKT). T26 serves as a coordination point for Mg(2+). The segment at 60–64 (GITIS) is G2. A G3 region spans residues 81–84 (DCPG). GTP-binding positions include 81 to 85 (DCPGH) and 136 to 139 (NKID). The G4 stretch occupies residues 136 to 139 (NKID). The interval 174-176 (SAL) is G5.

This sequence belongs to the TRAFAC class translation factor GTPase superfamily. Classic translation factor GTPase family. EF-Tu/EF-1A subfamily. As to quaternary structure, monomer.

The protein localises to the cytoplasm. The catalysed reaction is GTP + H2O = GDP + phosphate + H(+). GTP hydrolase that promotes the GTP-dependent binding of aminoacyl-tRNA to the A-site of ribosomes during protein biosynthesis. In Rickettsia rickettsii, this protein is Elongation factor Tu.